A 663-amino-acid polypeptide reads, in one-letter code: Alcohol oxidase 2 (663 aa).

8–38 is an FAD binding site; that stretch reads DILVLGGGSSGSCIAGRLANLDHSLKVGLIE. The active-site Proton acceptor is histidine 567. The short motif at 661–663 is the Microbody targeting signal element; it reads ARF.

Belongs to the GMC oxidoreductase family. Homooctamer. The cofactor is FAD.

The protein localises to the peroxisome matrix. It carries out the reaction a primary alcohol + O2 = an aldehyde + H2O2. It functions in the pathway energy metabolism; methane degradation. Functionally, minor isoform of alcohol oxidase, which catalyzes the oxidation of methanol to formaldehyde and hydrogen peroxide, the first step in the methanol utilization pathway of methylotrophic yeasts. This is Alcohol oxidase 2 (AOX2) from Komagataella phaffii (strain ATCC 76273 / CBS 7435 / CECT 11047 / NRRL Y-11430 / Wegner 21-1) (Yeast).